Consider the following 788-residue polypeptide: Autophagy-related protein 9 (788 aa).

The Cytoplasmic segment spans residues 1–171 (MTDKSTFLSV…EAYMYYTGKG (171 aa)). A compositionally biased stretch (basic and acidic residues) spans 32-42 (ILRRVEEEHAQ). Positions 32-127 (ILRRVEEEHA…TGVANGGLPR (96 aa)) are disordered. Over residues 44–58 (SDNSNSDNDSGNDSD) the composition is skewed to low complexity. The segment covering 101 to 112 (SFAQGTKTQTPI) has biased composition (polar residues). Residues 172-192 (LVSIILSRVLNMSTIMFVVVF) traverse the membrane as a helical segment. Topologically, residues 193–222 (STYLGSCIDYSKIKGSRTLDEVHVKQCYAK) are lumenal. The chain crosses the membrane as a helical span at residues 223-243 (LGSFHVFVLWTFFVLWFMKLF). Residues 244–390 (QYVKDIRRLV…QILSTGLRRR (147 aa)) lie on the Cytoplasmic side of the membrane. Phe-391 is an intramembrane region. The Cytoplasmic segment spans residues 392-479 (VFAAIMNVVF…PKEKTALVSK (88 aa)). The chain crosses the membrane as a helical span at residues 480–500 (FVSFIAGSFAAVLGIASLIDP). Residues 501-512 (ELFLMFEISANR) lie on the Lumenal side of the membrane. The helical transmembrane segment at 513-533 (TVLFYIGVFGSILAVSRSLIP) threads the bilayer. Residues 534-579 (EETLVFDPEISLRYVAEFTHYLPPEWEGKLHTEQVKNEFSLMYEMR) are Cytoplasmic-facing. The stretch at 580–600 (LIILLKELASIFLAPFILYYS) is an intramembrane region. The Cytoplasmic portion of the chain corresponds to 601 to 788 (LTQSCDDIVD…KKTDNMNLGA (188 aa)). Positions 715–736 (LSPAAPTATTATSGTATGAAPR) are disordered. A compositionally biased stretch (low complexity) spans 716-734 (SPAAPTATTATSGTATGAA).

Belongs to the ATG9 family. As to quaternary structure, homotrimer; forms a homotrimer with a central pore that forms a path between the two membrane leaflets. In terms of processing, phosphorylated by ATG1. ATG1 phosphorylation is required for preautophagosome elongation.

It localises to the preautophagosomal structure membrane. It is found in the cytoplasmic vesicle membrane. The protein resides in the golgi apparatus membrane. The protein localises to the endoplasmic reticulum membrane. It catalyses the reaction a 1,2-diacyl-sn-glycero-3-phosphocholine(in) = a 1,2-diacyl-sn-glycero-3-phosphocholine(out). It carries out the reaction a 1,2-diacyl-sn-glycero-3-phospho-L-serine(in) = a 1,2-diacyl-sn-glycero-3-phospho-L-serine(out). The enzyme catalyses a 1,2-diacyl-sn-glycero-3-phosphoethanolamine(in) = a 1,2-diacyl-sn-glycero-3-phosphoethanolamine(out). The catalysed reaction is a 1,2-diacyl-sn-glycero-3-phospho-(1D-myo-inositol-3-phosphate)(in) = a 1,2-diacyl-sn-glycero-3-phospho-(1D-myo-inositol-3-phosphate)(out). Phospholipid scramblase involved in autophagy and cytoplasm to vacuole transport (Cvt) vesicle formation. Cycles between the preautophagosomal structure/phagophore assembly site (PAS) and the cytoplasmic vesicle pool and supplies membrane for the growing autophagosome. Lipid scramblase activity plays a key role in preautophagosomal structure/phagophore assembly by distributing the phospholipids that arrive through ATG2 from the cytoplasmic to the luminal leaflet of the bilayer, thereby driving autophagosomal membrane expansion. Required for mitophagy. Also involved in endoplasmic reticulum-specific autophagic process and is essential for the survival of cells subjected to severe ER stress. Different machineries are required for anterograde trafficking to the PAS during either the Cvt pathway or bulk autophagy and for retrograde trafficking. The protein is Autophagy-related protein 9 of Yarrowia lipolytica (strain CLIB 122 / E 150) (Yeast).